The chain runs to 86 residues: Large ribosomal subunit protein bL27c (86 aa).

Residues 1–20 (MAHKKGSGSTRNGRDSNAQR) form a disordered region. The segment covering 7–19 (SGSTRNGRDSNAQ) has biased composition (polar residues).

The protein belongs to the bacterial ribosomal protein bL27 family.

The protein resides in the plastid. The protein localises to the chloroplast. The sequence is that of Large ribosomal subunit protein bL27c (rpl27) from Guillardia theta (Cryptophyte).